Here is a 127-residue protein sequence, read N- to C-terminus: uncharacterized protein (127 aa).

Positions 1–34 (MKNPESSGVSSSPQIQRVSPSSSSTSPSPPSIGT) are disordered. Residues 9-34 (VSSSPQIQRVSPSSSSTSPSPPSIGT) show a composition bias toward low complexity. Transmembrane regions (helical) follow at residues 47 to 67 (IAAV…PLAM) and 84 to 104 (TIAV…YLLV).

It is found in the membrane. This is an uncharacterized protein from Saccharomyces cerevisiae (strain ATCC 204508 / S288c) (Baker's yeast).